We begin with the raw amino-acid sequence, 268 residues long: MTLKARVIPCLDVKDGRVVKGVQFVDLIDAGDPVEAATAYDAAGADELCFLDITASHENRETIFDVIARTAEQCFMPLTVGGGVRQIPDIRRLLLAGADKVSINTAAVKEPEFVARAADKFGDQCIVVAIDAKKVSPPGQADRWEIFTHGGRNPTGIDAVEFARRVVDLGAGEILLTSMDRDGTKAGYDIALTQAVADAVRAPVIASGGVGTLDHLVEGIRDGHATAVLAASIFHFGTYTVAEAKRYMADAGIPMRLDAANAEGNAHE.

Residues D12 and D131 contribute to the active site.

The protein belongs to the HisA/HisF family. Heterodimer of HisH and HisF.

Its subcellular location is the cytoplasm. It catalyses the reaction 5-[(5-phospho-1-deoxy-D-ribulos-1-ylimino)methylamino]-1-(5-phospho-beta-D-ribosyl)imidazole-4-carboxamide + L-glutamine = D-erythro-1-(imidazol-4-yl)glycerol 3-phosphate + 5-amino-1-(5-phospho-beta-D-ribosyl)imidazole-4-carboxamide + L-glutamate + H(+). It functions in the pathway amino-acid biosynthesis; L-histidine biosynthesis; L-histidine from 5-phospho-alpha-D-ribose 1-diphosphate: step 5/9. Functionally, IGPS catalyzes the conversion of PRFAR and glutamine to IGP, AICAR and glutamate. The HisF subunit catalyzes the cyclization activity that produces IGP and AICAR from PRFAR using the ammonia provided by the HisH subunit. This Chelativorans sp. (strain BNC1) protein is Imidazole glycerol phosphate synthase subunit HisF.